The primary structure comprises 515 residues: Maturase K (515 aa).

The protein belongs to the intron maturase 2 family. MatK subfamily.

It is found in the plastid. The protein localises to the chloroplast. Usually encoded in the trnK tRNA gene intron. Probably assists in splicing its own and other chloroplast group II introns. This is Maturase K from Helonias bullata (Swamp pink).